A 469-amino-acid polypeptide reads, in one-letter code: MNPNQKIITIGSICMVIGIVSLMLQIGNIISIWVSHSIQTGNQHQAEPCNQSIITYENNTWVNQTYVNISNTNFLTEKAVASVTLAGNSSLCPISGWAVYSKDNGIRIGSKGDVFVIREPFISCSHLECRTFFLTQGALLNDKHSNGTVKDRSPYRTLMSCPVGEAPSPYNSRFESVAWSASACHDGTSWLTIGISGPDNGAVAVLKYNGIITDTIKSWRNNILRTQESECACVNGSCFTVMTDGPSNGQASYKIFKIEKGKVVKSVELNAPNYHYEECSCYPDAGEITCVCRDNWHGSNRPWVSFNQNLEYQIGYICSGVFGDNPRPNDGTGSCGPVSPNGAYGIKGFSFKYGNGVWIGRTKSTNSRSGFEMIWDPNGWTGTDSNFSVKQDIVAITDWSGYSGSFVQHPELTGVDCIRPCFWVELIRGRPKESTIWTSGSSISFCGVNSDTVGWSWPDGAELPFTIDK.

The Intravirion portion of the chain corresponds to 1-6 (MNPNQK). Residues 7–27 (IITIGSICMVIGIVSLMLQIG) traverse the membrane as a helical segment. The tract at residues 11–33 (GSICMVIGIVSLMLQIGNIISIW) is involved in apical transport and lipid raft association. Topologically, residues 28 to 469 (NIISIWVSHS…GAELPFTIDK (442 aa)) are virion surface. Positions 36–90 (HSIQTGNQHQAEPCNQSIITYENNTWVNQTYVNISNTNFLTEKAVASVTLAGNSS) are hypervariable stalk region. N-linked (GlcNAc...) asparagine; by host glycosylation is found at asparagine 50, asparagine 58, asparagine 63, asparagine 68, and asparagine 88. The interval 91 to 469 (LCPISGWAVY…GAELPFTIDK (379 aa)) is head of neuraminidase. 8 disulfides stabilise this stretch: cysteine 92/cysteine 417, cysteine 124/cysteine 129, cysteine 184/cysteine 231, cysteine 233/cysteine 238, cysteine 279/cysteine 292, cysteine 281/cysteine 290, cysteine 318/cysteine 335, and cysteine 421/cysteine 446. Arginine 118 provides a ligand contact to substrate. N-linked (GlcNAc...) asparagine; by host glycosylation is present at asparagine 146. Catalysis depends on aspartate 151, which acts as the Proton donor/acceptor. Residue arginine 152 participates in substrate binding. The N-linked (GlcNAc...) asparagine; by host glycan is linked to asparagine 235. 277-278 (EE) lines the substrate pocket. Substrate is bound at residue arginine 293. Ca(2+) is bound by residues aspartate 294, glycine 298, and aspartate 324. Residue arginine 368 participates in substrate binding. An N-linked (GlcNAc...) asparagine; by host glycan is attached at asparagine 386. Tyrosine 402 (nucleophile) is an active-site residue.

Belongs to the glycosyl hydrolase 34 family. Homotetramer. It depends on Ca(2+) as a cofactor. In terms of processing, N-glycosylated.

The protein localises to the virion membrane. It is found in the host apical cell membrane. It carries out the reaction Hydrolysis of alpha-(2-&gt;3)-, alpha-(2-&gt;6)-, alpha-(2-&gt;8)- glycosidic linkages of terminal sialic acid residues in oligosaccharides, glycoproteins, glycolipids, colominic acid and synthetic substrates.. Its activity is regulated as follows. Inhibited by the neuraminidase inhibitors zanamivir (Relenza) and oseltamivir (Tamiflu). These drugs interfere with the release of progeny virus from infected cells and are effective against all influenza strains. Resistance to neuraminidase inhibitors is quite rare. Functionally, catalyzes the removal of terminal sialic acid residues from viral and cellular glycoconjugates. Cleaves off the terminal sialic acids on the glycosylated HA during virus budding to facilitate virus release. Additionally helps virus spread through the circulation by further removing sialic acids from the cell surface. These cleavages prevent self-aggregation and ensure the efficient spread of the progeny virus from cell to cell. Otherwise, infection would be limited to one round of replication. Described as a receptor-destroying enzyme because it cleaves a terminal sialic acid from the cellular receptors. May facilitate viral invasion of the upper airways by cleaving the sialic acid moieties on the mucin of the airway epithelial cells. Likely to plays a role in the budding process through its association with lipid rafts during intracellular transport. May additionally display a raft-association independent effect on budding. Plays a role in the determination of host range restriction on replication and virulence. Sialidase activity in late endosome/lysosome traffic seems to enhance virus replication. The chain is Neuraminidase from Aves (Cat).